A 119-amino-acid polypeptide reads, in one-letter code: V-type proton ATPase subunit F (119 aa).

Belongs to the V-ATPase F subunit family. As to quaternary structure, V-ATPase is a heteromultimeric enzyme made up of two complexes: the ATP-hydrolytic V1 complex and the proton translocation V0 complex. The V1 complex consists of three catalytic AB heterodimers that form a heterohexamer, three peripheral stalks each consisting of EG heterodimers, one central rotor including subunits D and F, and the regulatory subunits C and H. The proton translocation complex V0 consists of the proton transport subunit a, a ring of proteolipid subunits c9c'', rotary subunit d, subunits e and f, and the accessory subunits ATP6AP1/Ac45 and ATP6AP2/PRR.

It is found in the cytoplasmic vesicle. It localises to the secretory vesicle. The protein resides in the synaptic vesicle membrane. The protein localises to the clathrin-coated vesicle membrane. In terms of biological role, subunit of the V1 complex of vacuolar(H+)-ATPase (V-ATPase), a multisubunit enzyme composed of a peripheral complex (V1) that hydrolyzes ATP and a membrane integral complex (V0) that translocates protons. V-ATPase is responsible for acidifying and maintaining the pH of intracellular compartments and in some cell types, is targeted to the plasma membrane, where it is responsible for acidifying the extracellular environment. The sequence is that of V-type proton ATPase subunit F (ATP6V1F) from Homo sapiens (Human).